We begin with the raw amino-acid sequence, 215 residues long: Glycerol-3-phosphate acyltransferase (215 aa).

Helical transmembrane passes span 14 to 34 (SSSA…AVVV), 63 to 83 (TAAA…LWLA), 92 to 112 (WGAY…PLFL), 128 to 148 (MAIE…VAVF), and 154 to 174 (LAAL…SGAA).

This sequence belongs to the PlsY family. As to quaternary structure, probably interacts with PlsX.

It localises to the cell inner membrane. It carries out the reaction an acyl phosphate + sn-glycerol 3-phosphate = a 1-acyl-sn-glycero-3-phosphate + phosphate. It functions in the pathway lipid metabolism; phospholipid metabolism. Catalyzes the transfer of an acyl group from acyl-phosphate (acyl-PO(4)) to glycerol-3-phosphate (G3P) to form lysophosphatidic acid (LPA). This enzyme utilizes acyl-phosphate as fatty acyl donor, but not acyl-CoA or acyl-ACP. This Bordetella bronchiseptica (strain ATCC BAA-588 / NCTC 13252 / RB50) (Alcaligenes bronchisepticus) protein is Glycerol-3-phosphate acyltransferase.